Reading from the N-terminus, the 212-residue chain is Fe/S biogenesis protein NfuA (212 aa).

2 residues coordinate [4Fe-4S] cluster: Cys169 and Cys172.

The protein belongs to the NfuA family. In terms of assembly, homodimer. [4Fe-4S] cluster serves as cofactor.

Functionally, involved in iron-sulfur cluster biogenesis. Binds a 4Fe-4S cluster, can transfer this cluster to apoproteins, and thereby intervenes in the maturation of Fe/S proteins. Could also act as a scaffold/chaperone for damaged Fe/S proteins. This is Fe/S biogenesis protein NfuA from Acinetobacter baylyi (strain ATCC 33305 / BD413 / ADP1).